Consider the following 151-residue polypeptide: Large ribosomal subunit protein bL9 (151 aa).

This sequence belongs to the bacterial ribosomal protein bL9 family.

In terms of biological role, binds to the 23S rRNA. The sequence is that of Large ribosomal subunit protein bL9 from Dehalococcoides mccartyi (strain ATCC BAA-2266 / KCTC 15142 / 195) (Dehalococcoides ethenogenes (strain 195)).